Consider the following 502-residue polypeptide: Xyloglucan-specific endo-beta-1,4-glucanase BoGH5A (502 aa).

The signal sequence occupies residues 1-32 (MEKQSFSDGLFSPLGIKRVIFMLVLLTTSFIS). Cysteine 33 carries N-palmitoyl cysteine lipidation. Cysteine 33 carries S-diacylglycerol cysteine lipidation. Residues 67–127 (GPAEWHISTS…PDIIINVKQS (61 aa)) form the BACON domain. Positions 165, 172, 251, and 296 each coordinate substrate. Glutamate 297 acts as the Proton donor in catalysis. Catalysis depends on glutamate 430, which acts as the Nucleophile. Tryptophan 472 serves as a coordination point for substrate.

The protein belongs to the glycosyl hydrolase 5 (cellulase A) family.

It localises to the cell outer membrane. The catalysed reaction is xyloglucan + H2O = xyloglucan oligosaccharides.. It participates in glucan metabolism; xyloglucan degradation. In terms of biological role, catalyzes endohydrolysis of 1,4-beta-D-glucosidic linkages in xyloglucan with retention of the beta-configuration of the glycosyl residues in xyloglucan degradation. Cleaves the backbone of the 3 major types of natural xyloglucans (seed galactoxyloglucan from tamarind kernel, dicot fucogalactoxyloglucan from lettuce leaves, and solanaceous arabinogalactoxyloglucan from tomato fruit), to produce xyloglucan oligosaccharides. In Bacteroides ovatus (strain ATCC 8483 / DSM 1896 / JCM 5824 / BCRC 10623 / CCUG 4943 / NCTC 11153), this protein is Xyloglucan-specific endo-beta-1,4-glucanase BoGH5A.